A 390-amino-acid polypeptide reads, in one-letter code: uncharacterized protein (390 aa).

Belongs to the glycosyltransferase group 1 family. Glycosyltransferase 4 subfamily.

This is an uncharacterized protein from Methanocaldococcus jannaschii (strain ATCC 43067 / DSM 2661 / JAL-1 / JCM 10045 / NBRC 100440) (Methanococcus jannaschii).